The primary structure comprises 78 residues: MSKVCQVTGKRRIVGHNVSHANNKTKRLFNPNLHERRFWVESENRWVRLKVSNHGLRVIDKCGIDAVLADIRKRGERV.

It belongs to the bacterial ribosomal protein bL28 family.

This is Large ribosomal subunit protein bL28 from Methylococcus capsulatus (strain ATCC 33009 / NCIMB 11132 / Bath).